The sequence spans 78 residues: Putative protein PeaD (78 aa).

This sequence belongs to the phage P protein family.

This chain is Putative protein PeaD (peaD), found in Escherichia coli (strain K12).